The chain runs to 126 residues: Protein ApaG (126 aa).

Residues Ser-2–His-126 enclose the ApaG domain.

The chain is Protein ApaG from Shewanella sp. (strain MR-4).